Consider the following 732-residue polypeptide: Polyphosphate kinase (732 aa).

Asn-61 contributes to the ATP binding site. Residues Arg-417 and Arg-447 each contribute to the Mg(2+) site. His-477 serves as the catalytic Phosphohistidine intermediate. Residues Tyr-510, Arg-606, and His-634 each contribute to the ATP site. Residues 699–718 (DGTYRQRQPAPGEAERGTHS) are disordered.

It belongs to the polyphosphate kinase 1 (PPK1) family. Requires Mg(2+) as cofactor. Post-translationally, an intermediate of this reaction is the autophosphorylated ppk in which a phosphate is covalently linked to a histidine residue through a N-P bond.

It carries out the reaction [phosphate](n) + ATP = [phosphate](n+1) + ADP. Catalyzes the reversible transfer of the terminal phosphate of ATP to form a long-chain polyphosphate (polyP). The chain is Polyphosphate kinase from Thermosynechococcus vestitus (strain NIES-2133 / IAM M-273 / BP-1).